Here is a 242-residue protein sequence, read N- to C-terminus: Orotidine 5'-phosphate decarboxylase (242 aa).

Substrate contacts are provided by residues aspartate 16, lysine 37, 64–73 (DLKFHDIPNT), threonine 128, arginine 190, glutamine 199, glycine 219, and arginine 220. Residue lysine 66 is the Proton donor of the active site.

It belongs to the OMP decarboxylase family. Type 1 subfamily. In terms of assembly, homodimer.

It catalyses the reaction orotidine 5'-phosphate + H(+) = UMP + CO2. Its pathway is pyrimidine metabolism; UMP biosynthesis via de novo pathway; UMP from orotate: step 2/2. Functionally, catalyzes the decarboxylation of orotidine 5'-monophosphate (OMP) to uridine 5'-monophosphate (UMP). This is Orotidine 5'-phosphate decarboxylase from Prochlorococcus marinus (strain AS9601).